The following is a 156-amino-acid chain: Snaclec A12 (156 aa).

The signal sequence occupies residues 1-23; that stretch reads MGRSISVSFGLLVVFLSLSGTGA. 3 disulfides stabilise this stretch: C27-C38, C55-C148, and C123-C140. The C-type lectin domain occupies 34 to 149; it reads YEGHCYKVFN…CELAYHFICM (116 aa).

This sequence belongs to the snaclec family. As to quaternary structure, heterodimer; disulfide-linked. Expressed by the venom gland.

It localises to the secreted. In terms of biological role, interferes with one step of hemostasis (modulation of platelet aggregation, or coagulation cascade, for example). This chain is Snaclec A12, found in Macrovipera lebetinus (Levantine viper).